We begin with the raw amino-acid sequence, 783 residues long: Putative ATP-dependent DNA helicase fml2 (783 aa).

In terms of domain architecture, Helicase ATP-binding spans 118 to 286; it reads FCEQALFHNL…KVVDCLHISK (169 aa). 131 to 138 is an ATP binding site; it reads LPTGLGKT. The DEAH box motif lies at 234–237; that stretch reads DEAH. The Helicase C-terminal domain maps to 450–619; the sequence is KMNHLLELLK…GKKIALKKDV (170 aa).

It belongs to the DEAD box helicase family. DEAH subfamily. FANCM sub-subfamily.

Its subcellular location is the nucleus. The protein resides in the nucleolus. It carries out the reaction ATP + H2O = ADP + phosphate + H(+). This chain is Putative ATP-dependent DNA helicase fml2, found in Schizosaccharomyces pombe (strain 972 / ATCC 24843) (Fission yeast).